A 494-amino-acid chain; its full sequence is Alpha-amylase B (494 aa).

A signal peptide spans 1–18 (MFLAKSIVCLALLAVANA). Gln-19 bears the Pyrrolidone carboxylic acid mark. Residues Cys-46 and Cys-102 are joined by a disulfide bond. Positions 116, 165, and 174 each coordinate Ca(2+). Cys-153 and Cys-167 form a disulfide bridge. Arg-202 contacts chloride. Asp-204 serves as the catalytic Nucleophile. Residue His-208 participates in Ca(2+) binding. Glu-241 serves as the catalytic Proton donor. Chloride contacts are provided by Asn-304 and Arg-343. 2 cysteine pairs are disulfide-bonded: Cys-376–Cys-382 and Cys-448–Cys-460.

The protein belongs to the glycosyl hydrolase 13 family. In terms of assembly, monomer. The cofactor is Ca(2+). Requires chloride as cofactor.

The catalysed reaction is Endohydrolysis of (1-&gt;4)-alpha-D-glucosidic linkages in polysaccharides containing three or more (1-&gt;4)-alpha-linked D-glucose units.. This is Alpha-amylase B (Amy-d) from Drosophila melanogaster (Fruit fly).